Reading from the N-terminus, the 445-residue chain is Probable D-serine dehydratase (445 aa).

Residue K119 is modified to N6-(pyridoxal phosphate)lysine.

The protein belongs to the serine/threonine dehydratase family. DsdA subfamily. Requires pyridoxal 5'-phosphate as cofactor.

The enzyme catalyses D-serine = pyruvate + NH4(+). The chain is Probable D-serine dehydratase from Pseudomonas putida (strain GB-1).